A 70-amino-acid chain; its full sequence is Myotoxin (70 aa).

The signal sequence occupies residues 1–22 (MKILYLLFAFLFLAFLSEPGNA). 3 disulfide bridges follow: Cys-26–Cys-58, Cys-33–Cys-52, and Cys-40–Cys-59.

Belongs to the crotamine-myotoxin family. In terms of assembly, monomer. In terms of tissue distribution, expressed by the venom gland.

It is found in the secreted. Its function is as follows. Cationic peptide that possesses multiple functions. It acts as a cell-penetrating peptide (CPP), and as a potent voltage-gated potassium channel (Kv) inhibitor. It exhibits antimicrobial activities, hind limb paralysis, and severe muscle necrosis by a non-enzymatic mechanism. This chain is Myotoxin, found in Crotalus helleri (Southern pacific rattlesnake).